The chain runs to 232 residues: Lipoarabinomannan carrier protein LprG (232 aa).

The N-terminal stretch at 1 to 21 is a signal peptide; sequence MQTRLTAILAAFLTAVALLAG. Cysteine 22 carries N-palmitoyl cysteine lipidation. A lipid anchor (S-diacylglycerol cysteine) is attached at cysteine 22.

The protein belongs to the LppX/LprAFG lipoprotein family. Post-translationally, modified by Lgt on Cys-22 with an S-linked diacylglyceral, signal peptide is removed by LspA, Cys-22 is further modifed with a fatty acid on its amino group by Lnt yielding a triacylated protein.

It is found in the cell inner membrane. In terms of biological role, helps membrane protein MHAS_02168/C731_2106 (P55) transport triacylglycerides (TAG) across the inner cell membrane into the periplasm and probably ultimately to the outer membrane. Binds TAG in its hydrophobic cavity and transfers it between lipid bilayers. TAG probably regulates lipid metabolism and growth regulation and plays a structural role in the outer membrane. Also binds mannosides, lipoarabinomannan and lipomannan and various glycolipids in the same cavity. The lprG-MHAS_02167/C731_2107 operon complements the vancomycin sensitivity of an M.smegmatis knockout of the same operon. The chain is Lipoarabinomannan carrier protein LprG from Mycolicibacterium hassiacum (strain DSM 44199 / CIP 105218 / JCM 12690 / 3849) (Mycobacterium hassiacum).